The chain runs to 300 residues: MTDTAPTPEKMPQKIVLVTGPSGAGRTTAIRALEDLGFEAIDNMPISLVPRLLDGPPLARPLALGLDARTRDFSVTAVADLLHLLAEDPRADAQLLFLDASPRVLTRRFSETRRRHPLAPLESPMDGIARETDLLAPIRARADVVIDTSELSPHDLRAEMLRWFGDRDSLRLAITVQSFSYKRGVPQGTDMVFDVRFLRNPYWEDTLRRLDGRDARVQDYVSADPRFDSFFDNIASLVRLLLPAYREEGKSHLSIGFGCTGGQHRSVTVAEKLSAALVAEGWQVSNRHLELSRRSIGAQS.

Residue 20 to 27 (GPSGAGRT) participates in ATP binding. 67 to 70 (DART) is a GTP binding site.

This sequence belongs to the RapZ-like family.

Displays ATPase and GTPase activities. The sequence is that of Nucleotide-binding protein Dshi_0209 from Dinoroseobacter shibae (strain DSM 16493 / NCIMB 14021 / DFL 12).